The chain runs to 1169 residues: Pesticidal crystal protein Cry1Gb (1169 aa).

It belongs to the delta endotoxin family.

Its function is as follows. Promotes colloidosmotic lysis by binding to the midgut epithelial cells of lepidopteran larvae. Toxic to Pieris rapae. This is Pesticidal crystal protein Cry1Gb (cry1Gb) from Bacillus thuringiensis subsp. wuhanensis.